A 147-amino-acid polypeptide reads, in one-letter code: UPF0178 protein Tgr7_2584 (147 aa).

This sequence belongs to the UPF0178 family.

This is UPF0178 protein Tgr7_2584 from Thioalkalivibrio sulfidiphilus (strain HL-EbGR7).